A 1268-amino-acid chain; its full sequence is Truncated polyprotein 1aTF (1268 aa).

Residues 8-28 (CMCTPAARVFWNAGQVFCTRC) form a C4-type; atypical zinc finger. The 112-residue stretch at 69 to 180 (ECTPSGCCWL…QPFCPFEEAH (112 aa)) folds into the Peptidase C31 domain. Residues 69 to 182 (ECTPSGCCWL…FCPFEEAHSD (114 aa)) are PCP1-alpha. Residues cysteine 76 and histidine 146 each act as for Nsp1-alpha papain-like cysteine proteinase activity in the active site. The interval 269–384 (PNVFDGKCWL…IFRFGAHKWY (116 aa)) is PCP1-beta. The Peptidase C32 domain maps to 269-385 (PNVFDGKCWL…FRFGAHKWYG (117 aa)). Catalysis depends on for Nsp1-beta papain-like cysteine proteinase activity residues cysteine 276 and histidine 345. Positions 420 to 527 (TYSPPTDGSC…VGVCSEGCVA (108 aa)) constitute a Peptidase C33 domain. Active-site for Nsp2 cysteine proteinase activity residues include cysteine 429 and histidine 498. Disordered regions lie at residues 728-758 (AIGS…SHPA) and 1027-1064 (SVTP…SHAS). Basic and acidic residues predominate over residues 737–749 (DSKRENMHNSRED). Helical transmembrane passes span 1119–1139 (LWLQ…CSVV), 1153–1173 (FLVL…LLLY), 1194–1214 (VMLS…AALW), and 1233–1253 (VISG…FLLF).

It is found in the host nucleus. It localises to the host cytoplasm. The protein localises to the host endoplasmic reticulum membrane. Its subcellular location is the membrane. Its function is as follows. Is essential for viral subgenomic mRNA synthesis. In terms of biological role, inhibits IFN-beta production. Counteracts the action of NF-kappaB by decreasing the phosphorylation of IkappaB-alpha, such that the degradation of IkappaB-alpha is suppressed. This leads to the blockage of NF-kappaB nuclear translocation and thus interference of NF-kappaB activation. Also seems to inhibit IRF3-dependent pathways. Nsp1-beta transactivates the programmed ribosomal frameshifting event leading to the expression of the 1aTF polyprotein. This Porcine reproductive and respiratory syndrome virus (isolate Pig/United States/SD 01-08/2001) (PRRSV) protein is Truncated polyprotein 1aTF.